Consider the following 199-residue polypeptide: Ribonuclease HII (199 aa).

The 190-residue stretch at 7 to 196 folds into the RNase H type-2 domain; the sequence is PWVCGVDEAG…VRELMANEKD (190 aa). Residues D13, E14, and D105 each contribute to the a divalent metal cation site.

Belongs to the RNase HII family. It depends on Mn(2+) as a cofactor. Mg(2+) serves as cofactor.

Its subcellular location is the cytoplasm. It catalyses the reaction Endonucleolytic cleavage to 5'-phosphomonoester.. Functionally, endonuclease that specifically degrades the RNA of RNA-DNA hybrids. The sequence is that of Ribonuclease HII from Nitrosospira multiformis (strain ATCC 25196 / NCIMB 11849 / C 71).